The following is a 195-amino-acid chain: Large ribosomal subunit protein uL18 (195 aa).

It belongs to the universal ribosomal protein uL18 family. In terms of assembly, part of the 50S ribosomal subunit. Contacts the 5S and 23S rRNAs.

Functionally, this is one of the proteins that bind and probably mediate the attachment of the 5S RNA into the large ribosomal subunit, where it forms part of the central protuberance. This chain is Large ribosomal subunit protein uL18, found in Methanocaldococcus jannaschii (strain ATCC 43067 / DSM 2661 / JAL-1 / JCM 10045 / NBRC 100440) (Methanococcus jannaschii).